The primary structure comprises 269 residues: MTVGVFAALGEEVARVRECLGGVGTERAGLTFYVVSVGALQVVYVCGGVGKVNAALCTQLLISEFGARVLINTGIAGALDERLCVFDVLVSVDAVQHDVDVTAFGYQKGRIPRMDSVEWTANTALRYLVREAFDLCTRDPEWTEGACALSGSGDPPSRVSRLVEGRVASGDLFVSDAQTRARIIREFGAHGVEMEGAAFAHVASVNGVPFVIIRCISDGAGAEQDVSMSYKEFSTRAARRSALLTLRVLERLSALRTSVVASLFPMVVV.

Catalysis depends on Glu12, which acts as the Proton acceptor. Residues Gly77, Val174, and 194–195 (ME) each bind substrate. The active-site Proton donor is Asp218.

This sequence belongs to the PNP/UDP phosphorylase family. MtnN subfamily.

It carries out the reaction S-adenosyl-L-homocysteine + H2O = S-(5-deoxy-D-ribos-5-yl)-L-homocysteine + adenine. The catalysed reaction is S-methyl-5'-thioadenosine + H2O = 5-(methylsulfanyl)-D-ribose + adenine. It catalyses the reaction 5'-deoxyadenosine + H2O = 5-deoxy-D-ribose + adenine. Its pathway is amino-acid biosynthesis; L-methionine biosynthesis via salvage pathway; S-methyl-5-thio-alpha-D-ribose 1-phosphate from S-methyl-5'-thioadenosine (hydrolase route): step 1/2. Its function is as follows. Catalyzes the irreversible cleavage of the glycosidic bond in both 5'-methylthioadenosine (MTA) and S-adenosylhomocysteine (SAH/AdoHcy) to adenine and the corresponding thioribose, 5'-methylthioribose and S-ribosylhomocysteine, respectively. Also cleaves 5'-deoxyadenosine, a toxic by-product of radical S-adenosylmethionine (SAM) enzymes, into 5-deoxyribose and adenine. In Treponema pallidum (strain Nichols), this protein is 5'-methylthioadenosine/S-adenosylhomocysteine nucleosidase (mtnN).